Consider the following 283-residue polypeptide: Bifunctional protein FolD (283 aa).

Residues 165 to 167 (GRS), Ser190, and Thr231 contribute to the NADP(+) site.

It belongs to the tetrahydrofolate dehydrogenase/cyclohydrolase family. In terms of assembly, homodimer.

The catalysed reaction is (6R)-5,10-methylene-5,6,7,8-tetrahydrofolate + NADP(+) = (6R)-5,10-methenyltetrahydrofolate + NADPH. The enzyme catalyses (6R)-5,10-methenyltetrahydrofolate + H2O = (6R)-10-formyltetrahydrofolate + H(+). The protein operates within one-carbon metabolism; tetrahydrofolate interconversion. Functionally, catalyzes the oxidation of 5,10-methylenetetrahydrofolate to 5,10-methenyltetrahydrofolate and then the hydrolysis of 5,10-methenyltetrahydrofolate to 10-formyltetrahydrofolate. The sequence is that of Bifunctional protein FolD from Nocardia farcinica (strain IFM 10152).